The primary structure comprises 302 residues: Polyamine aminopropyltransferase (302 aa).

The PABS domain maps to 4 to 239 (WTWHLEWQTP…GLWGFIYASD (236 aa)). S-methyl-5'-thioadenosine is bound at residue Q33. Spermidine contacts are provided by H64 and E88. S-methyl-5'-thioadenosine contacts are provided by residues D108 and 140–141 (DG). Residue D158 is the Proton acceptor of the active site. Position 167 (P167) interacts with S-methyl-5'-thioadenosine.

This sequence belongs to the spermidine/spermine synthase family. In terms of assembly, homodimer or homotetramer.

The protein localises to the cytoplasm. It carries out the reaction S-adenosyl 3-(methylsulfanyl)propylamine + putrescine = S-methyl-5'-thioadenosine + spermidine + H(+). It participates in amine and polyamine biosynthesis; spermidine biosynthesis; spermidine from putrescine: step 1/1. In terms of biological role, catalyzes the irreversible transfer of a propylamine group from the amino donor S-adenosylmethioninamine (decarboxy-AdoMet) to putrescine (1,4-diaminobutane) to yield spermidine. The sequence is that of Polyamine aminopropyltransferase from Sulfolobus acidocaldarius (strain ATCC 33909 / DSM 639 / JCM 8929 / NBRC 15157 / NCIMB 11770).